The primary structure comprises 144 residues: Cytochrome c-type biogenesis protein CcmE (144 aa).

The Cytoplasmic portion of the chain corresponds to 1-7 (MKPRHKR). Residues 8 to 28 (ALIIIAALIAIGVAALLILNA) traverse the membrane as a helical; Signal-anchor for type II membrane protein segment. Residues 29–144 (LNSNIALYVT…DQAQKNGSAK (116 aa)) lie on the Periplasmic side of the membrane. The heme site is built by His-121 and Tyr-125.

It belongs to the CcmE/CycJ family.

Its subcellular location is the cell inner membrane. Its function is as follows. Heme chaperone required for the biogenesis of c-type cytochromes. Transiently binds heme delivered by CcmC and transfers the heme to apo-cytochromes in a process facilitated by CcmF and CcmH. The chain is Cytochrome c-type biogenesis protein CcmE from Polynucleobacter necessarius subsp. necessarius (strain STIR1).